The sequence spans 530 residues: GMP synthase [glutamine-hydrolyzing] (530 aa).

The 190-residue stretch at 18–207 (TILVLDFGSQ…AVDICQAKTN (190 aa)) folds into the Glutamine amidotransferase type-1 domain. The active-site Nucleophile is the C94. Active-site residues include H181 and E183. The region spanning 208–405 (WSMENFIDTE…LGVPEDLVWR (198 aa)) is the GMPS ATP-PPase domain. An ATP-binding site is contributed by 236-242 (SGGVDST). The XMP site is built by R309, D467, K522, and E528.

As to quaternary structure, homodimer. The cofactor is Mg(2+).

It localises to the cytoplasm. It is found in the cytosol. The enzyme catalyses XMP + L-glutamine + ATP + H2O = GMP + L-glutamate + AMP + diphosphate + 2 H(+). It participates in purine metabolism; GMP biosynthesis; GMP from XMP (L-Gln route): step 1/1. In terms of biological role, catalyzes the conversion of xanthine monophosphate (XMP) to GMP in the presence of glutamine and ATP through an adenyl-XMP intermediate. In Candida albicans (strain SC5314 / ATCC MYA-2876) (Yeast), this protein is GMP synthase [glutamine-hydrolyzing] (GUA1).